We begin with the raw amino-acid sequence, 190 residues long: Ribonuclease HII (190 aa).

The RNase H type-2 domain occupies 1 to 190 (MAGVDEVGRG…FCRKIIENPD (190 aa)). Residues Asp5, Glu6, and Asp101 each contribute to the a divalent metal cation site.

The protein belongs to the RNase HII family. Mn(2+) serves as cofactor. It depends on Mg(2+) as a cofactor.

It localises to the cytoplasm. It carries out the reaction Endonucleolytic cleavage to 5'-phosphomonoester.. Functionally, endonuclease that specifically degrades the RNA of RNA-DNA hybrids. The polypeptide is Ribonuclease HII (rnhB) (Synechocystis sp. (strain ATCC 27184 / PCC 6803 / Kazusa)).